The primary structure comprises 248 residues: 1-(5-phosphoribosyl)-5-[(5-phosphoribosylamino)methylideneamino] imidazole-4-carboxamide isomerase (248 aa).

D8 functions as the Proton acceptor in the catalytic mechanism. D131 functions as the Proton donor in the catalytic mechanism.

Belongs to the HisA/HisF family.

It is found in the cytoplasm. The catalysed reaction is 1-(5-phospho-beta-D-ribosyl)-5-[(5-phospho-beta-D-ribosylamino)methylideneamino]imidazole-4-carboxamide = 5-[(5-phospho-1-deoxy-D-ribulos-1-ylimino)methylamino]-1-(5-phospho-beta-D-ribosyl)imidazole-4-carboxamide. It participates in amino-acid biosynthesis; L-histidine biosynthesis; L-histidine from 5-phospho-alpha-D-ribose 1-diphosphate: step 4/9. The protein is 1-(5-phosphoribosyl)-5-[(5-phosphoribosylamino)methylideneamino] imidazole-4-carboxamide isomerase of Cupriavidus taiwanensis (strain DSM 17343 / BCRC 17206 / CCUG 44338 / CIP 107171 / LMG 19424 / R1) (Ralstonia taiwanensis (strain LMG 19424)).